Here is a 104-residue protein sequence, read N- to C-terminus: Large ribosomal subunit protein uL24 (104 aa).

The protein belongs to the universal ribosomal protein uL24 family. In terms of assembly, part of the 50S ribosomal subunit.

In terms of biological role, one of two assembly initiator proteins, it binds directly to the 5'-end of the 23S rRNA, where it nucleates assembly of the 50S subunit. Functionally, one of the proteins that surrounds the polypeptide exit tunnel on the outside of the subunit. The sequence is that of Large ribosomal subunit protein uL24 from Pectobacterium atrosepticum (strain SCRI 1043 / ATCC BAA-672) (Erwinia carotovora subsp. atroseptica).